A 435-amino-acid chain; its full sequence is Glutamyl-tRNA reductase (435 aa).

Residues 49–52 (TCNR), Ser114, 119–121 (EPQ), and Gln125 contribute to the substrate site. The active-site Nucleophile is the Cys50. 204 to 209 (GAGETI) is a binding site for NADP(+).

This sequence belongs to the glutamyl-tRNA reductase family. Homodimer.

The enzyme catalyses (S)-4-amino-5-oxopentanoate + tRNA(Glu) + NADP(+) = L-glutamyl-tRNA(Glu) + NADPH + H(+). The protein operates within porphyrin-containing compound metabolism; protoporphyrin-IX biosynthesis; 5-aminolevulinate from L-glutamyl-tRNA(Glu): step 1/2. In terms of biological role, catalyzes the NADPH-dependent reduction of glutamyl-tRNA(Glu) to glutamate 1-semialdehyde (GSA). This chain is Glutamyl-tRNA reductase, found in Actinobacillus succinogenes (strain ATCC 55618 / DSM 22257 / CCUG 43843 / 130Z).